Consider the following 118-residue polypeptide: ATP synthase subunit c (118 aa).

The next 2 helical transmembrane spans lie at 34–54 and 88–108; these read AIFA…GAVG and MAMA…LIFA.

Belongs to the ATPase C chain family. As to quaternary structure, F-type ATPases have 2 components, F(1) - the catalytic core - and F(0) - the membrane proton channel. F(1) has five subunits: alpha(3), beta(3), gamma(1), delta(1), epsilon(1). F(0) has three main subunits: a(1), b(2) and c(10-14). The alpha and beta chains form an alternating ring which encloses part of the gamma chain. F(1) is attached to F(0) by a central stalk formed by the gamma and epsilon chains, while a peripheral stalk is formed by the delta and b chains.

It is found in the cell inner membrane. In terms of biological role, f(1)F(0) ATP synthase produces ATP from ADP in the presence of a proton or sodium gradient. F-type ATPases consist of two structural domains, F(1) containing the extramembraneous catalytic core and F(0) containing the membrane proton channel, linked together by a central stalk and a peripheral stalk. During catalysis, ATP synthesis in the catalytic domain of F(1) is coupled via a rotary mechanism of the central stalk subunits to proton translocation. Functionally, key component of the F(0) channel; it plays a direct role in translocation across the membrane. A homomeric c-ring of between 10-14 subunits forms the central stalk rotor element with the F(1) delta and epsilon subunits. The protein is ATP synthase subunit c of Syntrophus aciditrophicus (strain SB).